The chain runs to 193 residues: Peptidyl-tRNA hydrolase (193 aa).

Position 16 (Tyr-16) interacts with tRNA. His-21 acts as the Proton acceptor in catalysis. Positions 67, 69, and 115 each coordinate tRNA.

It belongs to the PTH family. Monomer.

The protein resides in the cytoplasm. The enzyme catalyses an N-acyl-L-alpha-aminoacyl-tRNA + H2O = an N-acyl-L-amino acid + a tRNA + H(+). Functionally, hydrolyzes ribosome-free peptidyl-tRNAs (with 1 or more amino acids incorporated), which drop off the ribosome during protein synthesis, or as a result of ribosome stalling. Its function is as follows. Catalyzes the release of premature peptidyl moieties from peptidyl-tRNA molecules trapped in stalled 50S ribosomal subunits, and thus maintains levels of free tRNAs and 50S ribosomes. The chain is Peptidyl-tRNA hydrolase from Psychrobacter cryohalolentis (strain ATCC BAA-1226 / DSM 17306 / VKM B-2378 / K5).